The sequence spans 201 residues: 5'(3')-deoxyribonucleotidase, cytosolic type (201 aa).

The active-site Nucleophile is the Asp10. Mg(2+)-binding residues include Asp10 and Asp12. Asp12 acts as the Proton donor in catalysis. Residues Phe18, Phe44, Tyr65, Thr99, and Lys134 each contribute to the substrate site. Asp145 contacts Mg(2+). Ser182 carries the phosphoserine modification.

This sequence belongs to the 5'(3')-deoxyribonucleotidase family. In terms of assembly, homodimer. The cofactor is Mg(2+). Detected in skeletal muscle, heart and pancreas.

It localises to the cytoplasm. Its function is as follows. Dephosphorylates the 5' and 2'(3')-phosphates of deoxyribonucleotides, with a preference for dUMP and dTMP, intermediate activity towards dGMP, and low activity towards dCMP and dAMP. In Homo sapiens (Human), this protein is 5'(3')-deoxyribonucleotidase, cytosolic type (NT5C).